Here is a 130-residue protein sequence, read N- to C-terminus: Phosphoribosyl-AMP cyclohydrolase (130 aa).

Asp78 serves as a coordination point for Mg(2+). Cys79 is a Zn(2+) binding site. Mg(2+) is bound by residues Asp80 and Asp82. Residues Cys96 and Cys103 each contribute to the Zn(2+) site.

The protein belongs to the PRA-CH family. In terms of assembly, homodimer. The cofactor is Mg(2+). It depends on Zn(2+) as a cofactor.

It is found in the cytoplasm. It carries out the reaction 1-(5-phospho-beta-D-ribosyl)-5'-AMP + H2O = 1-(5-phospho-beta-D-ribosyl)-5-[(5-phospho-beta-D-ribosylamino)methylideneamino]imidazole-4-carboxamide. Its pathway is amino-acid biosynthesis; L-histidine biosynthesis; L-histidine from 5-phospho-alpha-D-ribose 1-diphosphate: step 3/9. Catalyzes the hydrolysis of the adenine ring of phosphoribosyl-AMP. The chain is Phosphoribosyl-AMP cyclohydrolase from Nitrosospira multiformis (strain ATCC 25196 / NCIMB 11849 / C 71).